Consider the following 289-residue polypeptide: Nucleotide-binding protein FRAAL4592 (289 aa).

13–20 (GLSGAGRS) is an ATP binding site. 64–67 (DVRG) is a GTP binding site.

Belongs to the RapZ-like family.

In terms of biological role, displays ATPase and GTPase activities. In Frankia alni (strain DSM 45986 / CECT 9034 / ACN14a), this protein is Nucleotide-binding protein FRAAL4592.